The primary structure comprises 631 residues: Origin recognition complex subunit 1 (631 aa).

2 stretches are compositionally biased toward low complexity: residues 1-14 and 22-37; these read MTDE…YPPI and KLNN…NNNH. The segment at 1–164 is disordered; the sequence is MTDESSSSIS…EEEDEEGKFN (164 aa). The span at 55 to 80 shows a compositional bias: basic and acidic residues; it reads DNEKIGFSDPENEKINKHKASFKDSN. The span at 91-104 shows a compositional bias: acidic residues; it reads EDTDDDDYEDEDED. Residues 105-133 are compositionally biased toward basic and acidic residues; sequence ENHKIKDESDNSEDFNNHTKNTTDLDEGF. The segment covering 141 to 160 has biased composition (acidic residues); the sequence is ESEEEEEEEEYEEEEEEDEE. ATP-binding positions include V230 and 265–273; that span reads GMPGTGKTA. D361 and E362 together coordinate Mg(2+). Residues E362, N395, and R460 each contribute to the ATP site.

The protein belongs to the ORC1 family. In terms of assembly, ORC is composed of six subunits.

It is found in the nucleus. In terms of biological role, component of the origin recognition complex (ORC) that binds origins of replication. DNA-binding is ATP-dependent, however specific DNA sequences that define origins of replication have not been identified so far. ORC is required to assemble the pre-replication complex necessary to initiate DNA replication. This chain is Origin recognition complex subunit 1 (orcA), found in Dictyostelium discoideum (Social amoeba).